Reading from the N-terminus, the 210-residue chain is Orotate phosphoribosyltransferase (210 aa).

Residue Lys-26 participates in 5-phospho-alpha-D-ribose 1-diphosphate binding. 34-35 (FF) is a binding site for orotate. Residues 72 to 73 (YK), Arg-98, Lys-99, Lys-102, His-104, and 123 to 131 (DDVITAGTA) each bind 5-phospho-alpha-D-ribose 1-diphosphate. Residues Thr-127 and Arg-155 each coordinate orotate.

The protein belongs to the purine/pyrimidine phosphoribosyltransferase family. PyrE subfamily. In terms of assembly, homodimer. The cofactor is Mg(2+).

The enzyme catalyses orotidine 5'-phosphate + diphosphate = orotate + 5-phospho-alpha-D-ribose 1-diphosphate. The protein operates within pyrimidine metabolism; UMP biosynthesis via de novo pathway; UMP from orotate: step 1/2. In terms of biological role, catalyzes the transfer of a ribosyl phosphate group from 5-phosphoribose 1-diphosphate to orotate, leading to the formation of orotidine monophosphate (OMP). This is Orotate phosphoribosyltransferase from Legionella pneumophila (strain Paris).